The chain runs to 257 residues: 8-demethyl-8-aminoriboflavin-5'-phosphate synthase (257 aa).

Residues 11 to 13 (TLR), 19 to 21 (SQT), 91 to 94 (ITLN), 132 to 136 (CGNED), and tyrosine 240 contribute to the FMN site.

It belongs to the SsuE family. In terms of assembly, homotetramer.

The catalysed reaction is FMN + L-glutamate + 3 A + O2 + H2O = 8-amino-8-demethylriboflavin 5'-phosphate + 2-oxoglutarate + 3 AH2 + CO2 + H(+). The protein operates within antibiotic biosynthesis. Involved in the biosynthesis of the riboflavin analog antibiotic roseoflavin (3,8-dimethylamino-riboflavin). Catalyzes the site-specific substitution of the C-8 methyl group of riboflavin-5'-phosphate (FMN) by an amino group to yield 8-amino-8-demethylriboflavin 5'-phosphate, via a combined oxidation, decarboxylation and transamination reaction. The catalysis is initiated by an oxidation step in which the C-8 methyl group on the dimethylbenzene ring of FMN is converted to a formyl group to yield the 8-demethyl-8-formylriboflavin-5'-phosphate (OHC-RP) intermediate. In the presence of thiamine, the formyl group is oxidized into a carboxyl group to yield the 8-demethyl-8-carboxyriboflavin-5'-phosphate (HO2C-RP) intermediate. Finally, in the presence of L-glutamate as an amino donor, decarboxylation and aminotransfer occur, resulting in production of 8-demethyl-8-aminoriboflavin-5'-phosphate. Addition of NAD (but not NADP) to the reaction increases the yield 1.7-fold. The reaction also proceeds without the addition of any electron acceptor, and it is possible that molecular oxygen serves this role. This is 8-demethyl-8-aminoriboflavin-5'-phosphate synthase from Streptomyces davaonensis (strain DSM 101723 / JCM 4913 / KCC S-0913 / 768).